Here is a 236-residue protein sequence, read N- to C-terminus: 15,16-dihydrobiliverdin:ferredoxin oxidoreductase (236 aa).

This sequence belongs to the HY2 family.

The enzyme catalyses 15,16-dihydrobiliverdin + oxidized 2[4Fe-4S]-[ferredoxin] = biliverdin IXalpha + reduced 2[4Fe-4S]-[ferredoxin] + 2 H(+). Its function is as follows. Catalyzes the two-electron reduction of biliverdin IX-alpha at the C15 methine bridge. This chain is 15,16-dihydrobiliverdin:ferredoxin oxidoreductase, found in Prochlorococcus marinus (strain MIT 9215).